A 259-amino-acid polypeptide reads, in one-letter code: Imidazole glycerol phosphate synthase subunit HisF (259 aa).

Residues D11 and D130 contribute to the active site.

Belongs to the HisA/HisF family. In terms of assembly, heterodimer of HisH and HisF.

The protein resides in the cytoplasm. The catalysed reaction is 5-[(5-phospho-1-deoxy-D-ribulos-1-ylimino)methylamino]-1-(5-phospho-beta-D-ribosyl)imidazole-4-carboxamide + L-glutamine = D-erythro-1-(imidazol-4-yl)glycerol 3-phosphate + 5-amino-1-(5-phospho-beta-D-ribosyl)imidazole-4-carboxamide + L-glutamate + H(+). Its pathway is amino-acid biosynthesis; L-histidine biosynthesis; L-histidine from 5-phospho-alpha-D-ribose 1-diphosphate: step 5/9. In terms of biological role, IGPS catalyzes the conversion of PRFAR and glutamine to IGP, AICAR and glutamate. The HisF subunit catalyzes the cyclization activity that produces IGP and AICAR from PRFAR using the ammonia provided by the HisH subunit. The polypeptide is Imidazole glycerol phosphate synthase subunit HisF (Nitratidesulfovibrio vulgaris (strain DP4) (Desulfovibrio vulgaris)).